The primary structure comprises 236 residues: uncharacterized protein (236 aa).

This is an uncharacterized protein from Escherichia coli O157:H7.